Consider the following 77-residue polypeptide: U8-lycotoxin-Ls1m (77 aa).

The N-terminal stretch at 1 to 20 (MKLMIFTGLVLFAIVSLIEA) is a signal peptide. A propeptide spanning residues 21-26 (QAENEK) is cleaved from the precursor.

This sequence belongs to the neurotoxin 19 (CSTX) family. 08 (U8-Lctx) subfamily. Post-translationally, contains 4 disulfide bonds. In terms of tissue distribution, expressed by the venom gland.

It is found in the secreted. This chain is U8-lycotoxin-Ls1m, found in Lycosa singoriensis (Wolf spider).